The chain runs to 155 residues: cAMP-dependent protein kinase type II-alpha regulatory subunit (155 aa).

Residues 1–34 (SGSQDLEPSSGLVTDAIADSESEDDEDLDVPIPS) are disordered. Residues 1–81 (SGSQDLEPSS…LQEACKDILL (81 aa)) are dimerization and phosphorylation. The segment covering 18–29 (ADSESEDDEDLD) has biased composition (acidic residues). Phosphoserine occurs at positions 20 and 22. Serine 41 is subject to Phosphoserine; by PKA. 3',5'-cyclic AMP contacts are provided by residues 82–155 (FKNL…ALMY) and glutamate 150.

It belongs to the cAMP-dependent kinase regulatory chain family. The inactive form of the enzyme is composed of two regulatory chains and two catalytic chains. Activation by cAMP produces two active catalytic monomers and a regulatory dimer that binds four cAMP molecules. Interacts with AKAP4 and CBFA2T3. Interacts with the phosphorylated form of PJA2. Interacts with MYRIP; this interaction may link PKA to components of the exocytosis machinery, thus facilitating exocytosis, including insulin release. Forms a complex composed of PRKAR2A, GSK3B and GSKIP through GSKIP interaction; facilitates PKA-induced phosphorylation and regulates GSK3B activity. Interacts with ADCY8; inhibits adenylate cyclase activity through PKA phosphorylation. In terms of processing, phosphorylated by the activated catalytic chain. As to expression, four types of regulatory chains are found: I-alpha, I-beta, II-alpha, and II-beta. Their expression varies among tissues and is in some cases constitutive and in others inducible.

The protein resides in the cytoplasm. It localises to the cell membrane. Its function is as follows. Regulatory subunit of the cAMP-dependent protein kinases involved in cAMP signaling in cells. Type II regulatory chains mediate membrane association by binding to anchoring proteins, including the MAP2 kinase. The protein is cAMP-dependent protein kinase type II-alpha regulatory subunit (PRKAR2A) of Sus scrofa (Pig).